Consider the following 249-residue polypeptide: 5'-nucleotidase SurE (249 aa).

A divalent metal cation-binding residues include Asp-9, Asp-10, Ser-40, and Asn-92.

It belongs to the SurE nucleotidase family. Requires a divalent metal cation as cofactor.

The protein resides in the cytoplasm. It catalyses the reaction a ribonucleoside 5'-phosphate + H2O = a ribonucleoside + phosphate. Its function is as follows. Nucleotidase that shows phosphatase activity on nucleoside 5'-monophosphates. In Shewanella sediminis (strain HAW-EB3), this protein is 5'-nucleotidase SurE.